The sequence spans 340 residues: Delta(1)-pyrroline-2-carboxylate reductase 2 (340 aa).

The active-site Charge relay system is the S50. Residue H51 is the Proton donor of the active site. R55 contributes to the substrate binding site. 123–127 (HFSAL) is an NADP(+) binding site. T163 provides a ligand contact to substrate. 181-183 (DFA) contributes to the NADP(+) binding site. 189-190 (RG) lines the substrate pocket. D191 acts as the Charge relay system in catalysis. Residues 232 to 233 (HK) and 307 to 313 (RLPSQRR) contribute to the NADP(+) site.

It belongs to the LDH2/MDH2 oxidoreductase family. In terms of assembly, homodimer.

The enzyme catalyses L-proline + NAD(+) = 1-pyrroline-2-carboxylate + NADH + H(+). The catalysed reaction is L-proline + NADP(+) = 1-pyrroline-2-carboxylate + NADPH + H(+). In terms of biological role, catalyzes the reduction of Delta(1)-pyrroline-2-carboxylate (Pyr2C) to L-proline, using NADPH as the electron donor. May be involved in a degradation pathway that converts trans-3-hydroxy-L-proline (t3LHyp) to L-proline. This is Delta(1)-pyrroline-2-carboxylate reductase 2 from Burkholderia multivorans (strain ATCC 17616 / 249).